A 692-amino-acid polypeptide reads, in one-letter code: Putative ESX-1 scaffolding and assembly protein SaeA (692 aa).

The span at 1-21 (MGERGELVSDLHPSDDHDADP) shows a compositional bias: basic and acidic residues. Disordered stretches follow at residues 1–23 (MGER…DPRL) and 87–134 (PAAP…TTGF). Positions 89–107 (APEPDPPPVPEPQPEPEPG) are enriched in pro residues.

Functionally, may be involved in assembly of the ESX-1 / type VII specialized secretion system (T7SS), which exports several proteins including EsxA and EsxB. Involved in DNA conjugation in recipient (MKD8) but not donor (mc(2)155) strain. The protein is Putative ESX-1 scaffolding and assembly protein SaeA (saeA) of Mycolicibacterium smegmatis (strain MKD8) (Mycobacterium smegmatis).